Consider the following 365-residue polypeptide: Putative glutamate--cysteine ligase 2-2 (365 aa).

It belongs to the glutamate--cysteine ligase type 2 family. YbdK subfamily.

It carries out the reaction L-cysteine + L-glutamate + ATP = gamma-L-glutamyl-L-cysteine + ADP + phosphate + H(+). In terms of biological role, ATP-dependent carboxylate-amine ligase which exhibits weak glutamate--cysteine ligase activity. This chain is Putative glutamate--cysteine ligase 2-2, found in Mycolicibacterium vanbaalenii (strain DSM 7251 / JCM 13017 / BCRC 16820 / KCTC 9966 / NRRL B-24157 / PYR-1) (Mycobacterium vanbaalenii).